We begin with the raw amino-acid sequence, 101 residues long: MARKSLSSRQARREGLVARYADRRAELKRLVTHPDTDLSARDDAVRRLSRLPRDSSRVRLRNRDVIDGRPRGVLSRFGLSRVRFREMALRGELPGVRKASW.

The protein belongs to the universal ribosomal protein uS14 family. In terms of assembly, part of the 30S ribosomal subunit. Contacts proteins S3 and S10.

Functionally, binds 16S rRNA, required for the assembly of 30S particles and may also be responsible for determining the conformation of the 16S rRNA at the A site. This chain is Small ribosomal subunit protein uS14A, found in Salinispora arenicola (strain CNS-205).